Here is a 454-residue protein sequence, read N- to C-terminus: 3-phosphoshikimate 1-carboxyvinyltransferase (454 aa).

Residues 1-31 are disordered; that stretch reads MSENHSEGASRPVISRRPAAGLRADHPVHVP. 3 residues coordinate 3-phosphoshikimate: Lys-34, Ser-35, and Arg-39. Residue Lys-34 participates in phosphoenolpyruvate binding. The phosphoenolpyruvate site is built by Gly-107 and Arg-135. The 3-phosphoshikimate site is built by Ser-180, Gln-182, Asp-334, and Lys-361. Residue Gln-182 participates in phosphoenolpyruvate binding. Residue Asp-334 is the Proton acceptor of the active site. Arg-365 and Arg-409 together coordinate phosphoenolpyruvate.

This sequence belongs to the EPSP synthase family. As to quaternary structure, monomer.

The protein localises to the cytoplasm. The catalysed reaction is 3-phosphoshikimate + phosphoenolpyruvate = 5-O-(1-carboxyvinyl)-3-phosphoshikimate + phosphate. The protein operates within metabolic intermediate biosynthesis; chorismate biosynthesis; chorismate from D-erythrose 4-phosphate and phosphoenolpyruvate: step 6/7. Functionally, catalyzes the transfer of the enolpyruvyl moiety of phosphoenolpyruvate (PEP) to the 5-hydroxyl of shikimate-3-phosphate (S3P) to produce enolpyruvyl shikimate-3-phosphate and inorganic phosphate. In Granulibacter bethesdensis (strain ATCC BAA-1260 / CGDNIH1), this protein is 3-phosphoshikimate 1-carboxyvinyltransferase.